Reading from the N-terminus, the 274-residue chain is Non-heme haloperoxidase (274 aa).

An AB hydrolase-1 domain is found at 22–254; sequence PIMFHHGWPL…RLKVYPGLSH (233 aa). Active-site residues include S95, D225, and H254.

It belongs to the AB hydrolase superfamily. Bacterial non-heme haloperoxidase / perhydrolase family.

This Rhodococcus erythropolis (Arthrobacter picolinophilus) protein is Non-heme haloperoxidase (thcF).